The primary structure comprises 821 residues: Dapper homolog 1 (821 aa).

Residues 88–136 are a coiled coil; the sequence is LNTEEKLLEENILLLRKQLNCLRRRDAGLINQLQELDRQISDLRLDTET. 4 disordered regions span residues 288 to 312, 386 to 432, 564 to 615, and 627 to 655; these read SKPGEALNDEQKPEQVVGSQTSSWH, QDAS…STTN, NSAS…KTKR, and ERHTSSSGARSSAQRHHGHHRHHEAVLAK. Residues 388 to 400 show a composition bias toward low complexity; it reads ASATSTEPSTASP. A compositionally biased stretch (polar residues) spans 401–432; that stretch reads QRQWSAESKGGTPQNGAYLSSSQPQNSYSTTN. 3 stretches are compositionally biased toward basic residues: residues 584 to 593, 601 to 615, and 639 to 649; these read DKHRTGSRRT, HLHKSSKKASAKTKR, and AQRHHGHHRHH. Positions 818 to 821 match the PDZ-binding motif; the sequence is MTTV.

It belongs to the dapper family. In terms of assembly, interacts with dvl2.

The protein resides in the cytoplasm. In terms of biological role, involved in regulation of intracellular signaling pathways during development. Specifically thought to play a role in canonical and/or non-canonical Wnt signaling pathways through interaction with DSH (Dishevelled) family proteins. Binds to dvl2 and may regulate the degradation of ctnnb1/beta-catenin, thereby modulating the transcriptional activation of target genes of the Wnt signaling pathway. Seems to activate the canonical Wnt signaling pathway. This chain is Dapper homolog 1 (dact1), found in Danio rerio (Zebrafish).